Consider the following 375-residue polypeptide: Probable disease resistance protein At1g52660 (375 aa).

The NB-ARC domain occupies 158–372 (ENTGIIGLYG…LSNSPPNFSG (215 aa)). 167-174 (GVEGVGKT) serves as a coordination point for ATP.

In terms of biological role, possible disease resistance protein. The polypeptide is Probable disease resistance protein At1g52660 (Arabidopsis thaliana (Mouse-ear cress)).